Reading from the N-terminus, the 674-residue chain is Pentatricopeptide repeat-containing protein At4g17616 (674 aa).

PPR repeat units lie at residues G409 to M443, E444 to T478, M519 to P553, T554 to N584, and T593 to N627.

Belongs to the PPR family. P subfamily.

This chain is Pentatricopeptide repeat-containing protein At4g17616, found in Arabidopsis thaliana (Mouse-ear cress).